A 928-amino-acid chain; its full sequence is TBC1 domain family member 2A (928 aa).

M1 carries the post-translational modification N-acetylmethionine. The span at 1–19 (MEGAGENAPESSSSAPGSE) shows a compositional bias: low complexity. The disordered stretch occupies residues 1-39 (MEGAGENAPESSSSAPGSEESARDPQVPPPEEESGDCAR). An interaction with CADH1 region spans residues 1-169 (MEGAGENAPE…AGNGPVLHLE (169 aa)). The PH domain occupies 45–142 (PKKLCGYLSK…WLQQLQMKRW (98 aa)). Positions 225–275 (NKQAQGTGHEPPGEDSPQSGEPQREEQPLASDASTPGREPEDSPKPAPKPS) are disordered. The segment at 295 to 433 (SEGITRNRTA…KVTQDFTHPP (139 aa)) is interaction with RAC1. A coiled-coil region spans residues 298–416 (ITRNRTAQEK…LMDKNHAKQQ (119 aa)). The residue at position 436 (S436) is a Phosphoserine. The Rab-GAP TBC domain maps to 625 to 817 (GVPREHRPRV…RVWDAFLYEG (193 aa)). The stretch at 875–913 (MKQLRQLRMVHRERLEAELRELEQLKAEYLERRASRRRA) forms a coiled coil. Residues S915 and S920 each carry the phosphoserine modification.

Interacts with activated RAC1 and CDH1. Expressed in a broad range of tissues, especially in kidney, liver, lung and placenta. Also expressed in keratinocytes and epithelia-containing organs. Isoform 2 is differentially expressed in prostate normal and cancer cells (at protein level).

The protein localises to the cytoplasm. Its subcellular location is the cytoplasmic vesicle. It is found in the cell junction. Its function is as follows. Acts as a GTPase-activating protein for RAB7A. Signal effector acting as a linker between RAC1 and RAB7A, leading to RAB7A inactivation and subsequent inhibition of cadherin degradation and reduced cell-cell adhesion. The protein is TBC1 domain family member 2A (TBC1D2) of Homo sapiens (Human).